The primary structure comprises 470 residues: ATP synthase subunit beta (470 aa).

155 to 162 (GGAGVGKT) contacts ATP.

It belongs to the ATPase alpha/beta chains family. As to quaternary structure, F-type ATPases have 2 components, CF(1) - the catalytic core - and CF(0) - the membrane proton channel. CF(1) has five subunits: alpha(3), beta(3), gamma(1), delta(1), epsilon(1). CF(0) has three main subunits: a(1), b(2) and c(9-12). The alpha and beta chains form an alternating ring which encloses part of the gamma chain. CF(1) is attached to CF(0) by a central stalk formed by the gamma and epsilon chains, while a peripheral stalk is formed by the delta and b chains.

It is found in the cell membrane. The catalysed reaction is ATP + H2O + 4 H(+)(in) = ADP + phosphate + 5 H(+)(out). Its function is as follows. Produces ATP from ADP in the presence of a proton gradient across the membrane. The catalytic sites are hosted primarily by the beta subunits. This is ATP synthase subunit beta from Lacticaseibacillus casei (Lactobacillus casei).